The primary structure comprises 292 residues: Aquaporin-3 (292 aa).

Residues 1-24 (MGRQKELMNRCGEMLHIRYRLLRQ) lie on the Cytoplasmic side of the membrane. The helical transmembrane segment at 25 to 42 (ALAECLGTLILVMFGCGS) threads the bilayer. Residues 43–56 (VAQVVLSRGTHGGF) are Extracellular-facing. The helical transmembrane segment at 57-74 (LTINLAFGFAVTLGILVA) threads the bilayer. Residues 75–78 (GQVS) lie on the Cytoplasmic side of the membrane. Residues 79 to 92 (GAHLNPAVTFAMCF) constitute an intramembrane region (discontinuously helical). Positions 83 to 85 (NPA) match the NPA 1 motif. Over 93–100 (LAREPWIK) the chain is Cytoplasmic. A helical transmembrane segment spans residues 101–121 (LPIYALAQTLGAFLGAGIVFG). Over 122-159 (LYYDAIWAFANNELFVSGPNGTAGIFATYPSGHLDMVN) the chain is Extracellular. The N-linked (GlcNAc...) asparagine glycan is linked to Asn141. Residues 160–177 (GFFDQFIGTAALIVCVLA) traverse the membrane as a helical segment. The Cytoplasmic portion of the chain corresponds to 178 to 189 (IVDPYNNPVPRG). Residues 190-206 (LEAFTVGLVVLVIGTSM) form a helical membrane-spanning segment. At 207-210 (GFNS) the chain is on the extracellular side. An intramembrane region (discontinuously helical) is located at residues 211-224 (GYAVNPARDFGPRL). Residues 215–217 (NPA) carry the NPA 2 motif. Residues 225–242 (FTALAGWGSEVFTTGRHW) are Extracellular-facing. The helical transmembrane segment at 243–264 (WWVPIVSPLLGSIAGVFVYQLM) threads the bilayer. Over 265–292 (IGCHLEQPPPSTEEENVKLAHMKHKEQI) the chain is Cytoplasmic.

It belongs to the MIP/aquaporin (TC 1.A.8) family. As to quaternary structure, homotetramer; each monomer provides an independent glycerol/water pore. Could also exist in other oligomeric states. As to expression, detected in principal cells in collecting ducts in kidney medulla (at protein level). Renal medulla and colon. Predominantly in the inner medulla. Expressed in basal layer of epidermal keratinocytes.

The protein resides in the cell membrane. It localises to the basolateral cell membrane. The catalysed reaction is glycerol(in) = glycerol(out). The enzyme catalyses H2O(in) = H2O(out). It catalyses the reaction urea(in) = urea(out). It carries out the reaction H2O2(out) = H2O2(in). In terms of biological role, aquaglyceroporins form homotetrameric transmembrane channels, with each monomer independently mediating glycerol and water transport across the plasma membrane along their osmotic gradient. Could also be permeable to urea. Also participates in cell permeability to H2O2 and H2O2-mediated signaling. In skin, transports glycerol to the epidermis and stratum corneum, where it maintains hydration, elasticity, and supports lipid biosynthesis for barrier repair. In kidney, contributes to the reabsorption of water, helping the body maintain proper fluid balance. The protein is Aquaporin-3 of Mus musculus (Mouse).